A 377-amino-acid chain; its full sequence is tRNA pseudouridine synthase B (377 aa).

Asp-53 acts as the Nucleophile in catalysis.

This sequence belongs to the pseudouridine synthase TruB family. Type 1 subfamily.

The enzyme catalyses uridine(55) in tRNA = pseudouridine(55) in tRNA. Its function is as follows. Responsible for synthesis of pseudouridine from uracil-55 in the psi GC loop of transfer RNAs. In Tropheryma whipplei (strain Twist) (Whipple's bacillus), this protein is tRNA pseudouridine synthase B.